We begin with the raw amino-acid sequence, 166 residues long: Interferon gamma (166 aa).

The N-terminal stretch at 1-23 (MKYTSYILAFQLCVVLGSLGCYC) is a signal peptide. Gln-24 bears the Pyrrolidone carboxylic acid mark. N-linked (GlcNAc...) asparagine glycans are attached at residues Asn-48, Asn-86, and Asn-120.

Belongs to the type II (or gamma) interferon family. Homodimer. Interacts with IFNGR1 (via extracellular domain); this interaction promotes IFNGR1 dimerization. Released primarily from activated T lymphocytes.

Its subcellular location is the secreted. Functionally, type II interferon produced by immune cells such as T-cells and NK cells that plays crucial roles in antimicrobial, antiviral, and antitumor responses by activating effector immune cells and enhancing antigen presentation. Primarily signals through the JAK-STAT pathway after interaction with its receptor IFNGR1 to affect gene regulation. Upon IFNG binding, IFNGR1 intracellular domain opens out to allow association of downstream signaling components JAK2, JAK1 and STAT1, leading to STAT1 activation, nuclear translocation and transcription of IFNG-regulated genes. Many of the induced genes are transcription factors such as IRF1 that are able to further drive regulation of a next wave of transcription. Plays a role in class I antigen presentation pathway by inducing a replacement of catalytic proteasome subunits with immunoproteasome subunits. In turn, increases the quantity, quality, and repertoire of peptides for class I MHC loading. Increases the efficiency of peptide generation also by inducing the expression of activator PA28 that associates with the proteasome and alters its proteolytic cleavage preference. Up-regulates as well MHC II complexes on the cell surface by promoting expression of several key molecules such as cathepsins B/CTSB, H/CTSH, and L/CTSL. Participates in the regulation of hematopoietic stem cells during development and under homeostatic conditions by affecting their development, quiescence, and differentiation. The polypeptide is Interferon gamma (IFNG) (Callithrix jacchus (White-tufted-ear marmoset)).